Consider the following 353-residue polypeptide: S-adenosylmethionine:tRNA ribosyltransferase-isomerase (353 aa).

This sequence belongs to the QueA family. As to quaternary structure, monomer.

It is found in the cytoplasm. The enzyme catalyses 7-aminomethyl-7-carbaguanosine(34) in tRNA + S-adenosyl-L-methionine = epoxyqueuosine(34) in tRNA + adenine + L-methionine + 2 H(+). Its pathway is tRNA modification; tRNA-queuosine biosynthesis. Functionally, transfers and isomerizes the ribose moiety from AdoMet to the 7-aminomethyl group of 7-deazaguanine (preQ1-tRNA) to give epoxyqueuosine (oQ-tRNA). This chain is S-adenosylmethionine:tRNA ribosyltransferase-isomerase, found in Dinoroseobacter shibae (strain DSM 16493 / NCIMB 14021 / DFL 12).